We begin with the raw amino-acid sequence, 662 residues long: Protein translocase subunit SecA 2 (662 aa).

ATP contacts are provided by residues Gln110, Gly128–Thr132, and Asp538.

This sequence belongs to the SecA family. In terms of assembly, monomer and homodimer. Part of the essential Sec protein translocation apparatus which comprises SecA, SecYEG and auxiliary proteins SecDF. Other proteins may also be involved.

The protein localises to the cell inner membrane. Its subcellular location is the cytoplasm. The enzyme catalyses ATP + H2O + cellular proteinSide 1 = ADP + phosphate + cellular proteinSide 2.. Functionally, part of the Sec protein translocase complex. Interacts with the SecYEG preprotein conducting channel. Has a central role in coupling the hydrolysis of ATP to the transfer of proteins into and across the cell membrane, serving as an ATP-driven molecular motor driving the stepwise translocation of polypeptide chains across the membrane. The sequence is that of Protein translocase subunit SecA 2 from Chlorobium chlorochromatii (strain CaD3).